Consider the following 284-residue polypeptide: Neutral protease 2 homolog AFLA_119780 (284 aa).

2 disulfides stabilise this stretch: C113/C185 and C192/C210. A Zn(2+)-binding site is contributed by H235. Residue E236 is part of the active site. 2 residues coordinate Zn(2+): H239 and D250.

Belongs to the peptidase M35 family. The cofactor is Zn(2+).

The protein resides in the secreted. The enzyme catalyses Preferential cleavage of bonds with hydrophobic residues in P1'. Also 3-Asn-|-Gln-4 and 8-Gly-|-Ser-9 bonds in insulin B chain.. Functionally, secreted metalloproteinase that allows assimilation of proteinaceous substrates. Shows high activities on basic nuclear substrates such as histone and protamine. In Aspergillus flavus (strain ATCC 200026 / FGSC A1120 / IAM 13836 / NRRL 3357 / JCM 12722 / SRRC 167), this protein is Neutral protease 2 homolog AFLA_119780.